Reading from the N-terminus, the 353-residue chain is Phosphate acyltransferase (353 aa).

It belongs to the PlsX family. In terms of assembly, homodimer. Probably interacts with PlsY.

The protein resides in the cytoplasm. The enzyme catalyses a fatty acyl-[ACP] + phosphate = an acyl phosphate + holo-[ACP]. It participates in lipid metabolism; phospholipid metabolism. Catalyzes the reversible formation of acyl-phosphate (acyl-PO(4)) from acyl-[acyl-carrier-protein] (acyl-ACP). This enzyme utilizes acyl-ACP as fatty acyl donor, but not acyl-CoA. The protein is Phosphate acyltransferase of Rhodopseudomonas palustris (strain BisB5).